We begin with the raw amino-acid sequence, 374 residues long: Lipopolysaccharide glucosyltransferase WaaG (374 aa).

Glycine 15 and aspartate 19 together coordinate UDP-alpha-D-glucose. Residues tyrosine 103–phenylalanine 132 are membrane-interacting region. UDP-alpha-D-glucose-binding residues include arginine 173, arginine 208, lysine 209, arginine 261, glutamate 281, alanine 283, glycine 284, isoleucine 285, valine 286, and glutamate 289.

It belongs to the glycosyltransferase group 1 family. Glycosyltransferase 4 subfamily.

The protein localises to the cell inner membrane. It participates in bacterial outer membrane biogenesis; LPS core biosynthesis. Inhibited by divalent metal ions such as Mg(2+), Mn(2+), Ca(2+), Zn(2+), Co(2+), Ni(2+) and Cu(2+). In terms of biological role, glucosyltransferase involved in the biosynthesis of the core oligosaccharide region of lipopolysaccharide (LPS). Catalyzes the addition of the first outer-core glucose from UDP-glucose to the inner-core heptose II. Cannot use other sugar donors, such as UDP-galactose, UDP-glucuronic acid, UDP-galacuronic acid, GDP-mannose, ADP-glucose and GDP-glucose. In the absence of a lipid acceptor, can slowly hydrolyze UDP-glucose. The protein is Lipopolysaccharide glucosyltransferase WaaG of Escherichia coli (strain K12).